Reading from the N-terminus, the 312-residue chain is Olfactory receptor 6C75 (312 aa).

Over 1-23 (MRNSTAVTDFILLGLTSDPQWQV) the chain is Extracellular. N-linked (GlcNAc...) asparagine glycosylation occurs at Asn-3. Residues 24-44 (VLFIFLLVTYMLSVTGNLIII) form a helical membrane-spanning segment. The Cytoplasmic portion of the chain corresponds to 45 to 63 (TLTLSDPHLQTPMYFFLRN). A helical transmembrane segment spans residues 64–84 (FSFLEISFTSVCIPRFLVTVV). At 85–95 (TGNRTISYNGC) the chain is on the extracellular side. The cysteines at positions 95 and 177 are disulfide-linked. Residues 96-116 (VAQLFFFIFLGVTEFYLLAAM) traverse the membrane as a helical segment. At 117–140 (SYDRCMAICKPLHYTIIMSTRVCT) the chain is on the cytoplasmic side. Residues 141–161 (LLVFSSWLAGFLIIFPPVMLL) traverse the membrane as a helical segment. Topologically, residues 162–194 (LQLDFCASNVIDHFICDSSPMLQLSCTNTHFLE) are extracellular. The chain crosses the membrane as a helical span at residues 195–215 (LMAFFLAVVTLMVTLTLVILS). The Cytoplasmic segment spans residues 216 to 237 (YTNIIRTILKIPSMSQRKKAFS). The helical transmembrane segment at 238–258 (TCSSHMIVVSISYSSCIFMYI) threads the bilayer. At 259-269 (KTSARERVTLS) the chain is on the extracellular side. Residues 270-290 (KGVAVLNTSVAPLLNPFIYTL) form a helical membrane-spanning segment. The Cytoplasmic segment spans residues 291 to 312 (RNKQVKQAFKSMVQKMIFSLNK).

It belongs to the G-protein coupled receptor 1 family.

It localises to the cell membrane. Functionally, odorant receptor. The sequence is that of Olfactory receptor 6C75 (OR6C75) from Homo sapiens (Human).